Consider the following 64-residue polypeptide: Large ribosomal subunit protein bL35 (64 aa).

Residues 22-31 (GKVKHGHAYR) show a composition bias toward basic residues. Positions 22-64 (GKVKHGHAYRSHLAQSKTTKQKRQSRKSTLMNNSDFKRLKKLI) are disordered.

It belongs to the bacterial ribosomal protein bL35 family.

This Mesomycoplasma hyopneumoniae (strain 232) (Mycoplasma hyopneumoniae) protein is Large ribosomal subunit protein bL35.